Reading from the N-terminus, the 309-residue chain is Homoserine kinase (309 aa).

91–101 lines the ATP pocket; the sequence is PIGSGLGSSAC.

This sequence belongs to the GHMP kinase family. Homoserine kinase subfamily.

The protein resides in the cytoplasm. It carries out the reaction L-homoserine + ATP = O-phospho-L-homoserine + ADP + H(+). The protein operates within amino-acid biosynthesis; L-threonine biosynthesis; L-threonine from L-aspartate: step 4/5. Catalyzes the ATP-dependent phosphorylation of L-homoserine to L-homoserine phosphate. The protein is Homoserine kinase of Buchnera aphidicola subsp. Schizaphis graminum (strain Sg).